A 354-amino-acid polypeptide reads, in one-letter code: Green-sensitive opsin-3 (354 aa).

Residues 1–39 (MSGLNGFEGDNFYIPMSNRTGLVRDPFVYEQYYLAEPWQ) lie on the Extracellular side of the membrane. Asn18 carries an N-linked (GlcNAc...) asparagine glycan. The chain crosses the membrane as a helical span at residues 40-64 (FKLLACYMFFLICLGLPINGFTLFV). The Cytoplasmic portion of the chain corresponds to 65–76 (TAQHKKLQQPLN). The chain crosses the membrane as a helical span at residues 77–102 (FILVNLAVAGMIMVCFGFTITISSAV). Residues 103–116 (NGYFYFGPTACAIE) are Extracellular-facing. A disulfide bridge connects residues Cys113 and Cys190. A helical membrane pass occupies residues 117-136 (GFMATLGGEVALWSLVVLAI). The Cytoplasmic segment spans residues 137 to 155 (ERYIVVCKPMGSFKFSASH). The chain crosses the membrane as a helical span at residues 156–179 (ALGGIGFTWFMAMTCAAPPLVGWS). The Extracellular portion of the chain corresponds to 180–205 (RYIPEGLQCSCGPDYYTLNPKYNNES). Asn203 carries an N-linked (GlcNAc...) asparagine glycan. Residues 206-233 (YVIYMFVVHFIVPVTVIFFTYGRLVCTV) traverse the membrane as a helical segment. The Cytoplasmic segment spans residues 234–255 (KSAAAAQQDSASTQKAEKEVTR). The chain crosses the membrane as a helical span at residues 256 to 279 (MVILMVVGFLVAWTPYATVAAWIF). Topologically, residues 280 to 287 (FNKGAAFT) are extracellular. A helical transmembrane segment spans residues 288–312 (AQFMAVPAFFSKSSALFNPIIYVLL). Lys299 is modified (N6-(retinylidene)lysine). Topologically, residues 313 to 354 (NKQFRNCMLTTLFCGKNPLGDEESSTVSTKTEVSTVSSVSPA) are cytoplasmic.

Belongs to the G-protein coupled receptor 1 family. Opsin subfamily. The color pigments are found in the cone photoreceptor cells.

It is found in the membrane. In terms of biological role, visual pigments are the light-absorbing molecules that mediate vision. They consist of an apoprotein, opsin, covalently linked to cis-retinal. The sequence is that of Green-sensitive opsin-3 (RH11) from Psalidodon fasciatus (Banded astyanax).